The primary structure comprises 364 residues: Dihydroorotate dehydrogenase (quinone) (364 aa).

Residues 61–65 and Thr-85 contribute to the FMN site; that span reads AGFDK. Residue Lys-65 participates in substrate binding. 110 to 114 is a binding site for substrate; sequence NRMGF. The FMN site is built by Asn-139 and Asn-170. Asn-170 is a substrate binding site. The active-site Nucleophile is Ser-173. Asn-175 provides a ligand contact to substrate. FMN-binding residues include Lys-214 and Ala-242. 243–244 provides a ligand contact to substrate; that stretch reads NT. Residues Gly-266, Gly-295, and 316–317 each bind FMN; that span reads YS.

The protein belongs to the dihydroorotate dehydrogenase family. Type 2 subfamily. In terms of assembly, monomer. Requires FMN as cofactor.

It localises to the cell membrane. The catalysed reaction is (S)-dihydroorotate + a quinone = orotate + a quinol. Its pathway is pyrimidine metabolism; UMP biosynthesis via de novo pathway; orotate from (S)-dihydroorotate (quinone route): step 1/1. In terms of biological role, catalyzes the conversion of dihydroorotate to orotate with quinone as electron acceptor. The sequence is that of Dihydroorotate dehydrogenase (quinone) from Rhodopseudomonas palustris (strain TIE-1).